A 184-amino-acid chain; its full sequence is MARYGATSTNPAKSASARGSYLRVSFKNTRETAQAINGWELTKAQKYLDQVLDHQRAIPFRRFNSSIGRTAQGKEFGVTKARWPAKSVKFVQGLLQNAAANAEAKGLDATKLYVSHIQVNQAPKQRRRTYRAHGRINKYESSPSHIELVVTEKEEAVAKAAEKKVVRLTSRQRGRIAAQKRISA.

Lys46 participates in a covalent cross-link: Glycyl lysine isopeptide (Lys-Gly) (interchain with G-Cter in ubiquitin). Position 70 is a phosphothreonine (Thr70).

It belongs to the universal ribosomal protein uL22 family. In terms of assembly, component of the large ribosomal subunit (LSU). Mature yeast ribosomes consist of a small (40S) and a large (60S) subunit. The 40S small subunit contains 1 molecule of ribosomal RNA (18S rRNA) and 33 different proteins (encoded by 57 genes). The large 60S subunit contains 3 rRNA molecules (25S, 5.8S and 5S rRNA) and 46 different proteins (encoded by 81 genes). uL22 is associated with the polypeptide exit tunnel.

It localises to the cytoplasm. Component of the ribosome, a large ribonucleoprotein complex responsible for the synthesis of proteins in the cell. The small ribosomal subunit (SSU) binds messenger RNAs (mRNAs) and translates the encoded message by selecting cognate aminoacyl-transfer RNA (tRNA) molecules. The large subunit (LSU) contains the ribosomal catalytic site termed the peptidyl transferase center (PTC), which catalyzes the formation of peptide bonds, thereby polymerizing the amino acids delivered by tRNAs into a polypeptide chain. The nascent polypeptides leave the ribosome through a tunnel in the LSU and interact with protein factors that function in enzymatic processing, targeting, and the membrane insertion of nascent chains at the exit of the ribosomal tunnel. The polypeptide is Large ribosomal subunit protein uL22B (Saccharomyces cerevisiae (strain ATCC 204508 / S288c) (Baker's yeast)).